A 506-amino-acid chain; its full sequence is Glutamate--tRNA ligase (506 aa).

The 'HIGH' region motif lies at 12–22 (PSPTGDPHVGT). Positions 253 to 257 (KLSKR) match the 'KMSKS' region motif. Position 256 (K256) interacts with ATP.

The protein belongs to the class-I aminoacyl-tRNA synthetase family. Glutamate--tRNA ligase type 1 subfamily. Monomer.

It is found in the cytoplasm. It catalyses the reaction tRNA(Glu) + L-glutamate + ATP = L-glutamyl-tRNA(Glu) + AMP + diphosphate. Catalyzes the attachment of glutamate to tRNA(Glu) in a two-step reaction: glutamate is first activated by ATP to form Glu-AMP and then transferred to the acceptor end of tRNA(Glu). The polypeptide is Glutamate--tRNA ligase (Chlamydia muridarum (strain MoPn / Nigg)).